The sequence spans 270 residues: Undecaprenyl-diphosphatase (270 aa).

The next 7 helical transmembrane spans lie at 3–23, 42–62, 86–106, 108–128, 184–204, 217–237, and 249–269; these read TIVT…LPVS, WAMF…VQYW, LLAA…YIDV, LGSP…ILVI, AEFS…LELL, VGWS…LAVI, and FKPF…WLAM.

This sequence belongs to the UppP family.

The protein resides in the cell inner membrane. It carries out the reaction di-trans,octa-cis-undecaprenyl diphosphate + H2O = di-trans,octa-cis-undecaprenyl phosphate + phosphate + H(+). Its function is as follows. Catalyzes the dephosphorylation of undecaprenyl diphosphate (UPP). Confers resistance to bacitracin. The sequence is that of Undecaprenyl-diphosphatase from Novosphingobium aromaticivorans (strain ATCC 700278 / DSM 12444 / CCUG 56034 / CIP 105152 / NBRC 16084 / F199).